The chain runs to 133 residues: ATP synthase epsilon chain, chloroplastic (133 aa).

The protein belongs to the ATPase epsilon chain family. As to quaternary structure, F-type ATPases have 2 components, CF(1) - the catalytic core - and CF(0) - the membrane proton channel. CF(1) has five subunits: alpha(3), beta(3), gamma(1), delta(1), epsilon(1). CF(0) has three main subunits: a, b and c.

It is found in the plastid. It localises to the chloroplast thylakoid membrane. Its function is as follows. Produces ATP from ADP in the presence of a proton gradient across the membrane. This chain is ATP synthase epsilon chain, chloroplastic, found in Jasminum nudiflorum (Winter jasmine).